The primary structure comprises 285 residues: MVKELRERTGLGMMECKKALVEADGDIEKAIDDMRKSGQAKAAKKAGRTAAEGGVVVATNDANTVAVMVEINSETDFVARDDNFLGFCDKVAAAALSAGETDVAKIGELKLEDGSTVEEARQALVQKIGENIQIRRAAKLEAEGAIGAYVHGGRIGVLIALKGGDAELGKDVAMHVAAVNPMVVSGDQVPADVLEKEKEIIRAQPDMEGKPAEIVEKMLGGRINKFLKEVSLLDQPFVKDPNTTVGALVKAAGAEVASFERLVVGEGIEKEEVDFAAEVEAAAKG.

The involved in Mg(2+) ion dislocation from EF-Tu stretch occupies residues 75-78 (TDFV).

Belongs to the EF-Ts family.

Its subcellular location is the cytoplasm. Its function is as follows. Associates with the EF-Tu.GDP complex and induces the exchange of GDP to GTP. It remains bound to the aminoacyl-tRNA.EF-Tu.GTP complex up to the GTP hydrolysis stage on the ribosome. The protein is Elongation factor Ts of Alcanivorax borkumensis (strain ATCC 700651 / DSM 11573 / NCIMB 13689 / SK2).